Consider the following 480-residue polypeptide: NADH-quinone oxidoreductase subunit N (480 aa).

14 helical membrane passes run 12–32, 41–61, 80–100, 105–125, 130–150, 165–185, 204–224, 237–257, 275–295, 300–320, 326–346, 372–392, 406–428, and 450–470; these read LLIP…LGVF, LVQW…LFLV, FSKT…MPYL, LGKI…MMMV, LIAM…LAAF, FVLG…VYGF, IGLT…VSAA, APTP…IVLL, VIWM…LTQQ, LMAY…AAAS, ALLV…ATIL, GWSM…VGFF, LMIL…LRIV, and IARI…WLVF.

The protein belongs to the complex I subunit 2 family. NDH-1 is composed of 14 different subunits. Subunits NuoA, H, J, K, L, M, N constitute the membrane sector of the complex.

The protein localises to the cell inner membrane. It catalyses the reaction a quinone + NADH + 5 H(+)(in) = a quinol + NAD(+) + 4 H(+)(out). Its function is as follows. NDH-1 shuttles electrons from NADH, via FMN and iron-sulfur (Fe-S) centers, to quinones in the respiratory chain. The immediate electron acceptor for the enzyme in this species is believed to be ubiquinone. Couples the redox reaction to proton translocation (for every two electrons transferred, four hydrogen ions are translocated across the cytoplasmic membrane), and thus conserves the redox energy in a proton gradient. The protein is NADH-quinone oxidoreductase subunit N of Maricaulis maris (strain MCS10) (Caulobacter maris).